The primary structure comprises 412 residues: Divalent metal cation transporter MntH (412 aa).

11 consecutive transmembrane segments (helical) span residues 19–39, 46–66, 94–114, 122–142, 156–176, 196–216, 241–261, 290–310, 322–342, 348–368, and 392–412; these read LALMGPAFIAAIGYIDPGNFA, ASFGYQLLWVVVWANLMAMLI, VWFYWVQAEIIAMATDLAEFI, LILGVSLLQGAVLTGIATFLI, VIGGLLLFVAAAYIVELFFSQ, AVFLAAGVLGATIMPHVIYLH, IAMTIAGFVNLAMMATAAAAF, IFGLSLVAAGLSSTVVGTLAG, IPLWVRRAVTMAPSFIVILMG, ILVMSQVLLSFGIALALVPLL, and AIVVLVVALNIWLLVGTALGL.

It belongs to the NRAMP family.

The protein localises to the cell inner membrane. Functionally, h(+)-stimulated, divalent metal cation uptake system. The protein is Divalent metal cation transporter MntH of Cronobacter sakazakii (strain ATCC BAA-894) (Enterobacter sakazakii).